The following is a 235-amino-acid chain: Adapter protein MecA (235 aa).

Positions 113–135 (LRQSDKGDIVKSKVSSSDHKDGS) are enriched in basic and acidic residues. The interval 113 to 136 (LRQSDKGDIVKSKVSSSDHKDGSQ) is disordered.

It belongs to the MecA family. Homodimer.

Functionally, enables the recognition and targeting of unfolded and aggregated proteins to the ClpC protease or to other proteins involved in proteolysis. The sequence is that of Adapter protein MecA from Leuconostoc mesenteroides subsp. mesenteroides (strain ATCC 8293 / DSM 20343 / BCRC 11652 / CCM 1803 / JCM 6124 / NCDO 523 / NBRC 100496 / NCIMB 8023 / NCTC 12954 / NRRL B-1118 / 37Y).